Reading from the N-terminus, the 355-residue chain is Mu-like prophage FluMu I protein (355 aa).

The protein belongs to the peptidase U35 family.

Potential protease involved in virion morphogenesis. The protein is Mu-like prophage FluMu I protein of Haemophilus influenzae (strain ATCC 51907 / DSM 11121 / KW20 / Rd).